Consider the following 729-residue polypeptide: Elongation factor 2 (729 aa).

The tr-type G domain maps to 19-262 (EQIRNIAIAA…MVCEHFPNPV (244 aa)). Residues 28–35 (AHVDHGKT), 94–98 (DTPGH), and 148–151 (NKVD) each bind GTP. H597 carries the post-translational modification Diphthamide.

Belongs to the TRAFAC class translation factor GTPase superfamily. Classic translation factor GTPase family. EF-G/EF-2 subfamily.

The protein localises to the cytoplasm. Functionally, catalyzes the GTP-dependent ribosomal translocation step during translation elongation. During this step, the ribosome changes from the pre-translocational (PRE) to the post-translocational (POST) state as the newly formed A-site-bound peptidyl-tRNA and P-site-bound deacylated tRNA move to the P and E sites, respectively. Catalyzes the coordinated movement of the two tRNA molecules, the mRNA and conformational changes in the ribosome. This Natronomonas pharaonis (strain ATCC 35678 / DSM 2160 / CIP 103997 / JCM 8858 / NBRC 14720 / NCIMB 2260 / Gabara) (Halobacterium pharaonis) protein is Elongation factor 2.